A 104-amino-acid polypeptide reads, in one-letter code: Urease subunit beta (104 aa).

This sequence belongs to the urease beta subunit family. In terms of assembly, heterotrimer of UreA (gamma), UreB (beta) and UreC (alpha) subunits. Three heterotrimers associate to form the active enzyme.

Its subcellular location is the cytoplasm. It carries out the reaction urea + 2 H2O + H(+) = hydrogencarbonate + 2 NH4(+). It participates in nitrogen metabolism; urea degradation; CO(2) and NH(3) from urea (urease route): step 1/1. The sequence is that of Urease subunit beta from Mycobacterium bovis (strain BCG / Pasteur 1173P2).